Here is a 248-residue protein sequence, read N- to C-terminus: Small ribosomal subunit protein uS3 (248 aa).

The KH type-2 domain occupies 38-106; that stretch reads VREYLVKTLD…QVALNILEVK (69 aa). Basic and acidic residues predominate over residues 213-230; it reads ESEINAPAERRGRGDRNG. The interval 213–248 is disordered; it reads ESEINAPAERRGRGDRNGRPRRGGQRRQRSEQKQEG.

The protein belongs to the universal ribosomal protein uS3 family. Part of the 30S ribosomal subunit. Forms a tight complex with proteins S10 and S14.

Its function is as follows. Binds the lower part of the 30S subunit head. Binds mRNA in the 70S ribosome, positioning it for translation. In Corynebacterium diphtheriae (strain ATCC 700971 / NCTC 13129 / Biotype gravis), this protein is Small ribosomal subunit protein uS3.